We begin with the raw amino-acid sequence, 479 residues long: ATP synthase subunit beta (479 aa).

153 to 160 (GGAGVGKT) contacts ATP.

Belongs to the ATPase alpha/beta chains family. In terms of assembly, F-type ATPases have 2 components, CF(1) - the catalytic core - and CF(0) - the membrane proton channel. CF(1) has five subunits: alpha(3), beta(3), gamma(1), delta(1), epsilon(1). CF(0) has three main subunits: a(1), b(2) and c(9-12). The alpha and beta chains form an alternating ring which encloses part of the gamma chain. CF(1) is attached to CF(0) by a central stalk formed by the gamma and epsilon chains, while a peripheral stalk is formed by the delta and b chains.

Its subcellular location is the cell membrane. The enzyme catalyses ATP + H2O + 4 H(+)(in) = ADP + phosphate + 5 H(+)(out). Produces ATP from ADP in the presence of a proton gradient across the membrane. The catalytic sites are hosted primarily by the beta subunits. The protein is ATP synthase subunit beta of Lactobacillus delbrueckii subsp. bulgaricus (strain ATCC BAA-365 / Lb-18).